Consider the following 582-residue polypeptide: Protein NARROW LEAF 1 (582 aa).

Disordered regions lie at residues 1-26 (MKPS…VDHQ) and 531-582 (GMSP…DLEK). A compositionally biased stretch (basic and acidic residues) spans 562–572 (LGDREPKRLRS). A Nuclear localization signal motif is present at residues 567-573 (PKRLRSD). Over residues 573 to 582 (DSGSSLDLEK) the composition is skewed to low complexity.

Expressed in leaf sheaths, leaf blades, culms and panicles. Preferentially expressed in vascular tissues in leaves and culms.

Its subcellular location is the nucleus. The protein resides in the nucleoplasm. It localises to the cytoplasm. Functionally, involved in the regulation of lateral leaf growth. May be involved in the regulation of basipetal polar auxin transport (PAT) and vascular patterning in leaves. Controls photosynthesis rate by regulating carboxylation efficiency and consequently photosynthesis rate. Controls panicle and spikelet numbers, and grain yield. The sequence is that of Protein NARROW LEAF 1 from Oryza sativa subsp. japonica (Rice).